The chain runs to 335 residues: Casein kinase I (335 aa).

In terms of domain architecture, Protein kinase spans 9–278 (YRLGRKIGSG…LRRLFKDLFF (270 aa)). ATP-binding positions include 15 to 23 (IGSGSFGDI) and Lys-38. Asp-128 functions as the Proton acceptor in the catalytic mechanism. The disordered stretch occupies residues 304–335 (RSMVNQGAESGNQWRRDASGRDPLGRLPQLEP). Residues 305-316 (SMVNQGAESGNQ) are compositionally biased toward polar residues. The segment covering 317–327 (WRRDASGRDPL) has biased composition (basic and acidic residues).

Belongs to the protein kinase superfamily. CK1 Ser/Thr protein kinase family. Casein kinase I subfamily.

It carries out the reaction L-seryl-[protein] + ATP = O-phospho-L-seryl-[protein] + ADP + H(+). The enzyme catalyses L-threonyl-[protein] + ATP = O-phospho-L-threonyl-[protein] + ADP + H(+). Casein kinases are operationally defined by their preferential utilization of acidic proteins such as caseins as substrates. It can phosphorylate a large number of proteins. The protein is Casein kinase I of Eimeria tenella (Coccidian parasite).